A 411-amino-acid chain; its full sequence is Arginase (411 aa).

Residues 83-106 (NNYINNNDNNNDNNNDNNNDNNNN) are disordered. Residues H193, D216, H218, and D220 each contribute to the Mn(2+) site. Positions 222, 229, and 274 each coordinate L-arginine. Mn(2+) is bound by residues D323 and D325.

Belongs to the arginase family. As to quaternary structure, homotrimer; oligomerization is dependent on Mn(2+) binding. Mn(2+) serves as cofactor.

The enzyme catalyses L-arginine + H2O = urea + L-ornithine. It participates in nitrogen metabolism; urea cycle; L-ornithine and urea from L-arginine: step 1/1. Feedback inhibition by product L-ornithine,. Inhibited by 2(S)-amino-6-boronohexanoic acid (ABH); however, with less efficiency than human ARG1. Catalyzes the hydrolysis of L-arginine into urea and L-ornithine, which is a precursor for polyamine biosynthesis. May play a role in parasite intra-hepatic development during the host liver stage. The protein is Arginase of Plasmodium falciparum (isolate 3D7).